Consider the following 585-residue polypeptide: Glycerol-3-phosphate dehydrogenase 2 (585 aa).

37–65 (DVVVIGGGVVGSGCALDAATRGLKVALVE) contributes to the FAD binding site.

Belongs to the FAD-dependent glycerol-3-phosphate dehydrogenase family. It depends on FAD as a cofactor.

The protein localises to the cytoplasm. The catalysed reaction is a quinone + sn-glycerol 3-phosphate = dihydroxyacetone phosphate + a quinol. In Mycobacterium bovis (strain ATCC BAA-935 / AF2122/97), this protein is Glycerol-3-phosphate dehydrogenase 2 (glpD2).